The sequence spans 142 residues: Ribonuclease VapC25 (142 aa).

A PINc domain is found at Leu-3–Arg-139. 2 residues coordinate Mg(2+): Asp-5 and Asp-108.

This sequence belongs to the PINc/VapC protein family. It depends on Mg(2+) as a cofactor.

In terms of biological role, toxic component of a type II toxin-antitoxin (TA) system. An RNase. Upon expression in M.smegmatis inhibits colony formation. Its toxic effect is neutralized by coexpression with cognate antitoxin VapB25. The polypeptide is Ribonuclease VapC25 (Mycobacterium tuberculosis (strain ATCC 25618 / H37Rv)).